We begin with the raw amino-acid sequence, 312 residues long: Phosphoribosylaminoimidazole-succinocarboxamide synthase (312 aa).

It belongs to the SAICAR synthetase family.

It carries out the reaction 5-amino-1-(5-phospho-D-ribosyl)imidazole-4-carboxylate + L-aspartate + ATP = (2S)-2-[5-amino-1-(5-phospho-beta-D-ribosyl)imidazole-4-carboxamido]succinate + ADP + phosphate + 2 H(+). The protein operates within purine metabolism; IMP biosynthesis via de novo pathway; 5-amino-1-(5-phospho-D-ribosyl)imidazole-4-carboxamide from 5-amino-1-(5-phospho-D-ribosyl)imidazole-4-carboxylate: step 1/2. In Legionella pneumophila (strain Paris), this protein is Phosphoribosylaminoimidazole-succinocarboxamide synthase.